Here is a 434-residue protein sequence, read N- to C-terminus: Ribulose bisphosphate carboxylase-like protein (434 aa).

Residues Lys-198, Asp-200, and Glu-201 each coordinate Mg(2+). N6-carboxylysine is present on Lys-198.

This sequence belongs to the RuBisCO large chain family. Type IV subfamily. As to quaternary structure, homodimer. Mg(2+) serves as cofactor.

Functionally, may be involved in sulfur metabolism and oxidative stress response. Does not show RuBisCO activity. The sequence is that of Ribulose bisphosphate carboxylase-like protein from Chlorobaculum thiosulfatiphilum (Chlorobium limicola f.sp. thiosulfatophilum).